The chain runs to 32 residues: Giant hemoglobin AIV chain (32 aa).

Belongs to the globin family. In terms of assembly, giant hemoglobin is composed of four heme-containing chains (AI to AIV), and two linker chains (AV and AVI).

The protein is Giant hemoglobin AIV chain of Lamellibrachia sp. (Deep-sea giant tube worm).